The following is a 676-amino-acid chain: Protein cereblon (676 aa).

Residues 1 to 11 show a composition bias toward acidic residues; that stretch reads MDDEETAEIDE. Disordered regions lie at residues 1–78, 118–194, and 249–276; these read MDDE…TTAH, EDAG…AVPR, and DDAN…LDVD. 2 stretches are compositionally biased toward low complexity: residues 12-33 and 125-139; these read TSSS…TETA and VPQN…TPPA. Residues 156-177 show a composition bias toward polar residues; it reads LVNNDSPSQASISSRHSGSDMS. One can recognise a Lon N-terminal domain in the interval 314–542; sequence RMLIFMHQHI…IIGTTLKHES (229 aa). The 110-residue stretch at 541–650 folds into the CULT domain; the sequence is ESLFYCRYCN…LAGSSVRIGK (110 aa). 4 residues coordinate Zn(2+): Cys546, Cys549, Cys615, and Cys618.

This sequence belongs to the CRBN family. In terms of assembly, likely a component of a DCX (DDB1-CUL4-X-box) protein ligase complex. May interact with pic/DDB1. Post-translationally, ubiquitinated.

It localises to the nucleus. The protein operates within protein modification; protein ubiquitination. Its function is as follows. Substrate recognition component of a DCX (DDB1-CUL4-X-box) E3 protein ligase complex that mediates the ubiquitination and subsequent proteasomal degradation of target proteins. Has an essential role in mediating growth by negatively regulating insulin signaling. It also has a role in maintaining presynaptic function in the neuromuscular junction synapses of third-instar larvae. The chain is Protein cereblon from Drosophila mojavensis (Fruit fly).